Consider the following 464-residue polypeptide: Cysteine--tRNA ligase (464 aa).

C27 provides a ligand contact to Zn(2+). The short motif at 29-39 (PTVYNFFHIGN) is the 'HIGH' region element. The Zn(2+) site is built by C207, H232, and E236. The short motif at 264-268 (KMSKS) is the 'KMSKS' region element. K267 is a binding site for ATP.

The protein belongs to the class-I aminoacyl-tRNA synthetase family. Monomer. The cofactor is Zn(2+).

It localises to the cytoplasm. It catalyses the reaction tRNA(Cys) + L-cysteine + ATP = L-cysteinyl-tRNA(Cys) + AMP + diphosphate. This is Cysteine--tRNA ligase from Clostridium acetobutylicum (strain ATCC 824 / DSM 792 / JCM 1419 / IAM 19013 / LMG 5710 / NBRC 13948 / NRRL B-527 / VKM B-1787 / 2291 / W).